Here is a 321-residue protein sequence, read N- to C-terminus: Glucokinase (321 aa).

8–13 (GDVGGT) contributes to the ATP binding site.

This sequence belongs to the bacterial glucokinase family.

The protein localises to the cytoplasm. It carries out the reaction D-glucose + ATP = D-glucose 6-phosphate + ADP + H(+). This chain is Glucokinase, found in Shigella dysenteriae serotype 1 (strain Sd197).